A 313-amino-acid polypeptide reads, in one-letter code: Altered inheritance of mitochondria protein 32 (313 aa).

Belongs to the AIM32 family.

This chain is Altered inheritance of mitochondria protein 32 (AIM32), found in Candida glabrata (strain ATCC 2001 / BCRC 20586 / JCM 3761 / NBRC 0622 / NRRL Y-65 / CBS 138) (Yeast).